The following is a 1341-amino-acid chain: DNA-directed RNA polymerase subunit beta (1341 aa).

The protein belongs to the RNA polymerase beta chain family. As to quaternary structure, the RNAP catalytic core consists of 2 alpha, 1 beta, 1 beta' and 1 omega subunit. When a sigma factor is associated with the core the holoenzyme is formed, which can initiate transcription.

The catalysed reaction is RNA(n) + a ribonucleoside 5'-triphosphate = RNA(n+1) + diphosphate. Its function is as follows. DNA-dependent RNA polymerase catalyzes the transcription of DNA into RNA using the four ribonucleoside triphosphates as substrates. This Pseudoalteromonas translucida (strain TAC 125) protein is DNA-directed RNA polymerase subunit beta.